The chain runs to 919 residues: MSTTSGTGGVSYRNGTQRSSLRTQSSASTSSGGQKASVKSKSVLRKSSPAALGGGSSKSGGGGDAGVPGRVRVAVRLRPRNGEELIADADFADCVELQPELKRLKLRKNNWDTDTFEFDEVLTEYASQKRVYEVVAKPVVEGVLDGYNGTIMAYGQTGTGKTYTLGQLGEEDVADRGIMVRAMEDILAEVSLETDSISVSYLQLYMETVQDLLDPSNDNIAIVEDPKNGDVSLPGATLVEIRDQQSFLELLQLGEAHRFAANTKLNTESSRSHAILMVNVRRSMKTRDGLSSESNGNSHMTKSLKPPVVRKGKLVVVDLAGSERINKSGSEGHTLEEAKSINLSLSALGKCINALAENSSHVPFRDSKLTRLLRDSFGGTARTSLVITIGPSPRHRGETTSTIMFGQRAMKVENMVKIKEEFDYKSLSRRLEVQLDNLIEENERQQKAFVDEIERITVEAHNQISEAEKRYANALEDEKLRYQNDYMESIKKLEENWSKNQKKLAAERLALGEKNGLDITSNGNRSIAPALEEVSELKKLLQKEAQSKMAAEEEVNRLKHQLNEFKKVEASGNSEIMRLHKMLENETQQKEKLEGEIATLHSQLLQLSLTADETRRNLEQHGSEKTSGARDSLMSQLRLPQIQDPGNAEKPPVARLFEQVGLQKILSLLEAEDADVRIHAVKVVANLAAEEANQQQIVEAGGLTSLLMLLKNTEDETIHRVAAGAIANLAMNETNQELIMDQGGIGLLSSTAANAEDPQTLRMVAGAIANLCGNDKLQTKLRSEGGIAALLGMVRCGHPDVLAQVARGIANFAKCESRASTQGTKRGKSLLIEDGALSWIVQNAKTETAAIRRHIELALCHLAQHEGNAKEMVKEGAMWELVRISRDCSREDIRSLAHRTLTSSPTFLTELRRLRVDIR.

The tract at residues 1-68 is disordered; it reads MSTTSGTGGV…SGGGGDAGVP (68 aa). A compositionally biased stretch (low complexity) spans 15–51; that stretch reads GTQRSSLRTQSSASTSSGGQKASVKSKSVLRKSSPAA. The span at 52–66 shows a compositional bias: gly residues; the sequence is LGGGSSKSGGGGDAG. The region spanning 70-412 is the Kinesin motor domain; that stretch reads RVRVAVRLRP…IMFGQRAMKV (343 aa). 155 to 162 serves as a coordination point for ATP; that stretch reads GQTGTGKT. The segment at 286–305 is disordered; the sequence is TRDGLSSESNGNSHMTKSLK. Positions 291-301 are enriched in polar residues; sequence SSESNGNSHMT. The D-BOX motif lies at 382-390; the sequence is RTSLVITIG. Coiled-coil stretches lie at residues 428 to 492 and 530 to 621; these read SRRL…SIKK and ALEE…LEQH. ARM repeat units follow at residues 650-689, 691-731, 733-773, and 775-814; these read KPPV…NLAA, EANQ…NLAM, ETNQ…NLCG, and DKLQ…NFAK.

This sequence belongs to the TRAFAC class myosin-kinesin ATPase superfamily. Kinesin family. Ungrouped subfamily. As to quaternary structure, interacts (via C-terminus) with NEK5. As to expression, expressed in leaves, guard cells, trichomes, vascular tissues, stele of the root tip region and columella cells. Highest expression detected in guard cells.

It localises to the cytoplasm. The protein resides in the cytoskeleton. The polypeptide is Kinesin-like protein KIN-UA (Arabidopsis thaliana (Mouse-ear cress)).